The chain runs to 2527 residues: Highly reducing polyketide synthase poxF (2527 aa).

A Ketosynthase family 3 (KS3) domain is found at Val20 to Ser445. Catalysis depends on for beta-ketoacyl synthase activity residues Cys193, His328, and His368. The malonyl-CoA:ACP transacylase (MAT) domain stretch occupies residues Val560–Gln882. Residues His951–Gln1086 form an N-terminal hotdog fold region. The tract at residues His951 to Thr1243 is dehydratase (DH) domain. In terms of domain architecture, PKS/mFAS DH spans His951–Val1270. His983 functions as the Proton acceptor; for dehydratase activity in the catalytic mechanism. The C-terminal hotdog fold stretch occupies residues Ala1108–Val1270. Asp1174 functions as the Proton donor; for dehydratase activity in the catalytic mechanism. Residues Glu1406–Pro1587 form a methyltransferase (CMet) domain region. An enoyl reductase (ER) (ER) domain region spans residues Gly1823–Leu2137. The interval Thr2162–Ser2339 is ketoreductase (KR) domain. Positions Glu2445–Ser2522 constitute a Carrier domain. Position 2482 is an O-(pantetheine 4'-phosphoryl)serine (Ser2482).

Its pathway is secondary metabolite biosynthesis. In terms of biological role, highly reducing polyketide synthase; part of the gene cluster that mediates the biosynthesis of oxaleimides, cytotoxic compounds containing an unusual disubstituted succinimide moiety. The first step of the pathway is provided by the HR-PKS poxF that serves in a new mode of collaborative biosynthesis with the PKS-NRPS poxE, by providing the olefin containing amino acid substrate via the synthesis of an ACP-bound dec-4-enoate. The cytochrome P450 monooxygenase poxM-catalyzed oxidation at the alpha-position creates the enzyme-bound 2-hydroxydec-4-enoyl-ACP thioester, which may be prone to spontaneous hydrolysis to yield 2-hydroxydec-4-enoic acid due to increased electrophilicity of the carbonyl. 2-hydroxydec-4-enoic acid can then be further oxidized by poxM to yield the alpha-ketoacid 2-oxodec-4-enoicacid, which is reductively aminated by the aminotransferase poxL to yield (S,E)-2-aminodec-4-enoic acid. The Hybrid PKS-NRPS synthetase poxE then performs condensation between the octaketide product of its PKS modules and the amino group of (S,E)-2-aminodec-4-enoic acid which is activated and incorporated by the adenylation domain. The resulting aminoacyl product can be cyclized by the Diels-Alderase PoxQ and reductively released by the reductive (R) domain of poxE to yield an aldehyde intermediate. The released aldehyde is then substrate for a Knoevenagel condensation by the hydrolyase poxO followed by an oxidation at the 5-position of the pyrrolidone ring. The presence of the olefin from the amino acid building block allows for migration of the substituted allyl group to occur. This allylic transposition reaction takes place in a conjugate addition, semipinacol-like fashion to yield a succinimide intermediate. Iterative two-electron oxidations of the C7 methyl of the succinimide intermediate to the carboxylic acid can be catalyzed by one of two remaining cytochrome P450 monooxygenasess poxC or poxD to yield oxaleimide A. Subsequent oxidation yields the maleimide scaffold oxaleimide I. Both oxaleimide A and oxaleimide I can undergo oxidative modifications in the decalin ring to yield the series of products oxaleimides B to H. The polypeptide is Highly reducing polyketide synthase poxF (Penicillium oxalicum).